A 369-amino-acid polypeptide reads, in one-letter code: Protein phosphatase 1 regulatory inhibitor subunit PPP1R8 homolog (369 aa).

Positions 1–11 (MYGRSGLDRFK) are enriched in basic and acidic residues. Residues 1-26 (MYGRSGLDRFKKSQTSEPFSVSANPP) form a disordered region. The segment covering 13–23 (SQTSEPFSVSA) has biased composition (polar residues). One can recognise an FHA domain in the interval 87-138 (HIFGRQHQTCDFVLDHQSVSRQHAAVVPHKNGSIFVIDLGSAHGTFVANERL). The tract at residues 345–369 (VSQPAAETECGGVGEEDDNDDLFGD) is disordered. A compositionally biased stretch (acidic residues) spans 358 to 369 (GEEDDNDDLFGD).

As to quaternary structure, interacts with human protein phosphatase PPP1C.

Functionally, inhibitor of protein-phosphatase 1 (PP1). Binds to and inhibits PP1 activity. This is Protein phosphatase 1 regulatory inhibitor subunit PPP1R8 homolog from Arabidopsis thaliana (Mouse-ear cress).